A 292-amino-acid polypeptide reads, in one-letter code: Glycine--tRNA ligase alpha subunit (292 aa).

The protein belongs to the class-II aminoacyl-tRNA synthetase family. Tetramer of two alpha and two beta subunits.

The protein resides in the cytoplasm. The catalysed reaction is tRNA(Gly) + glycine + ATP = glycyl-tRNA(Gly) + AMP + diphosphate. This Pelotomaculum thermopropionicum (strain DSM 13744 / JCM 10971 / SI) protein is Glycine--tRNA ligase alpha subunit.